Reading from the N-terminus, the 390-residue chain is Carbamoyl phosphate synthase small chain (390 aa).

Positions 1-198 (MTSTPTPTPT…LGEGYAVGPE (198 aa)) are CPSase. Residues Ser53, Gly250, and Gly252 each coordinate L-glutamine. Residues 202 to 390 (RVVVLDYGVK…VGELKGRVEA (189 aa)) form the Glutamine amidotransferase type-1 domain. Cys279 functions as the Nucleophile in the catalytic mechanism. L-glutamine-binding residues include Leu280, Gln283, Asn321, Gly323, and Phe324. Active-site residues include His363 and Glu365.

This sequence belongs to the CarA family. As to quaternary structure, composed of two chains; the small (or glutamine) chain promotes the hydrolysis of glutamine to ammonia, which is used by the large (or ammonia) chain to synthesize carbamoyl phosphate. Tetramer of heterodimers (alpha,beta)4.

The enzyme catalyses hydrogencarbonate + L-glutamine + 2 ATP + H2O = carbamoyl phosphate + L-glutamate + 2 ADP + phosphate + 2 H(+). The catalysed reaction is L-glutamine + H2O = L-glutamate + NH4(+). It functions in the pathway amino-acid biosynthesis; L-arginine biosynthesis; carbamoyl phosphate from bicarbonate: step 1/1. Its pathway is pyrimidine metabolism; UMP biosynthesis via de novo pathway; (S)-dihydroorotate from bicarbonate: step 1/3. In terms of biological role, small subunit of the glutamine-dependent carbamoyl phosphate synthetase (CPSase). CPSase catalyzes the formation of carbamoyl phosphate from the ammonia moiety of glutamine, carbonate, and phosphate donated by ATP, constituting the first step of 2 biosynthetic pathways, one leading to arginine and/or urea and the other to pyrimidine nucleotides. The small subunit (glutamine amidotransferase) binds and cleaves glutamine to supply the large subunit with the substrate ammonia. The polypeptide is Carbamoyl phosphate synthase small chain (Maricaulis maris (strain MCS10) (Caulobacter maris)).